A 204-amino-acid polypeptide reads, in one-letter code: FMN-dependent NADH:quinone oxidoreductase (204 aa).

Residue Ser9 coordinates FMN.

It belongs to the azoreductase type 1 family. In terms of assembly, homodimer. The cofactor is FMN.

The catalysed reaction is 2 a quinone + NADH + H(+) = 2 a 1,4-benzosemiquinone + NAD(+). It catalyses the reaction N,N-dimethyl-1,4-phenylenediamine + anthranilate + 2 NAD(+) = 2-(4-dimethylaminophenyl)diazenylbenzoate + 2 NADH + 2 H(+). Its function is as follows. Quinone reductase that provides resistance to thiol-specific stress caused by electrophilic quinones. In terms of biological role, also exhibits azoreductase activity. Catalyzes the reductive cleavage of the azo bond in aromatic azo compounds to the corresponding amines. In Thiobacillus denitrificans (strain ATCC 25259 / T1), this protein is FMN-dependent NADH:quinone oxidoreductase.